Reading from the N-terminus, the 642-residue chain is Threonine--tRNA ligase (642 aa).

The region spanning 1 to 61 is the TGS domain; sequence MIKVTFPDGN…EHDGKLQLLT (61 aa). The catalytic stretch occupies residues 240 to 539; the sequence is DHRKIGKDLD…LIEEYKGSFP (300 aa). Residues cysteine 334, histidine 385, and histidine 516 each coordinate Zn(2+).

The protein belongs to the class-II aminoacyl-tRNA synthetase family. In terms of assembly, homodimer. It depends on Zn(2+) as a cofactor.

It is found in the cytoplasm. It carries out the reaction tRNA(Thr) + L-threonine + ATP = L-threonyl-tRNA(Thr) + AMP + diphosphate + H(+). Functionally, catalyzes the attachment of threonine to tRNA(Thr) in a two-step reaction: L-threonine is first activated by ATP to form Thr-AMP and then transferred to the acceptor end of tRNA(Thr). Also edits incorrectly charged L-seryl-tRNA(Thr). This Acholeplasma laidlawii (strain PG-8A) protein is Threonine--tRNA ligase.